Consider the following 718-residue polypeptide: K(+)-insensitive pyrophosphate-energized proton pump (718 aa).

6 consecutive transmembrane segments (helical) span residues 6–26 (AVLV…IWAI), 61–81 (IAIV…LNAA), 83–103 (GFLI…HVSV), 112–132 (AASL…AITG), 133–153 (LLVA…LTVW), and 168–188 (VSLG…GGIF). Position 190 (Lys190) interacts with substrate. 4 residues coordinate Mg(2+): Asp193, Asp197, Asn220, and Asp223. 6 helical membrane-spanning segments follow: residues 235 to 255 (LFET…IFFH), 265 to 285 (LYPL…TFFV), 300 to 320 (GLIA…TLTV), 335 to 355 (GTNL…IVVI), 385 to 405 (GLAV…GGII), and 413 to 433 (LFGT…IVAL). Asp441 lines the Mg(2+) pocket. A run of 4 helical transmembrane segments spans residues 472 to 492 (AVTK…LFAA), 524 to 544 (YVVA…GMAM), 593 to 613 (IIPS…VLLI), and 620 to 640 (AFAA…FVAI). The Ca(2+) site is built by Asp650, Asp682, and Asp686. Lys689 contacts substrate. A helical membrane pass occupies residues 695-715 (AVNPAIKITNIVALLLLAVLA).

It belongs to the H(+)-translocating pyrophosphatase (TC 3.A.10) family. K(+)-insensitive subfamily. As to quaternary structure, homodimer. It depends on Mg(2+) as a cofactor.

Its subcellular location is the cell inner membrane. The enzyme catalyses diphosphate + H2O + H(+)(in) = 2 phosphate + 2 H(+)(out). Proton pump that utilizes the energy of pyrophosphate hydrolysis as the driving force for proton movement across the membrane. Generates a proton motive force. The chain is K(+)-insensitive pyrophosphate-energized proton pump from Brucella melitensis biotype 1 (strain ATCC 23456 / CCUG 17765 / NCTC 10094 / 16M).